Reading from the N-terminus, the 171-residue chain is Disulfide bond formation protein B (171 aa).

Topologically, residues 1-8 (MQWSYRFV) are cytoplasmic. A helical transmembrane segment spans residues 9 to 25 (SGLLVLASIVGMTFALY). Residues 26–43 (LEHFKGLEPCPLCIFQRV) are Periplasmic-facing. C35 and C38 are joined by a disulfide. Residues 44–60 (GLMAMGIVALIAFLHNP) form a helical membrane-spanning segment. Residues 61-67 (VSNAFKR) lie on the Cytoplasmic side of the membrane. A helical transmembrane segment spans residues 68–85 (VYAFLATLGILWSVGVAI). At 86–142 (RHVWLQTLPPDQVPSCGPGLNYLLDALPLKTVLQQVLQGSGECAAIHWTFLGQSLPV) the chain is on the periplasmic side. A disulfide bridge connects residues C101 and C128. Residues 143 to 161 (WSLAYFSLILLVCVWQLLR) form a helical membrane-spanning segment. Topologically, residues 162–171 (RYPVIVTKKK) are cytoplasmic.

It belongs to the DsbB family.

It localises to the cell inner membrane. Functionally, required for disulfide bond formation in some periplasmic proteins. Acts by oxidizing the DsbA protein. The polypeptide is Disulfide bond formation protein B (Acinetobacter baylyi (strain ATCC 33305 / BD413 / ADP1)).